The sequence spans 847 residues: Bifunctional lysine-specific demethylase and histidyl-hydroxylase NO66 (847 aa).

Polar residues predominate over residues 1–24; that stretch reads MEKVTNSAAAKPQGNNKKQESAYN. Disordered stretches follow at residues 1–45, 203–223, and 254–320; these read MEKV…SDLL, AEAD…KESV, and AEKE…ERKQ. Basic and acidic residues predominate over residues 203-214; sequence AEADAKNNDTKK. Positions 268-278 are enriched in low complexity; the sequence is STSSKEAAAAK. Residues 279–288 show a composition bias toward basic and acidic residues; the sequence is TADHERRLLA. Over residues 304–314 the composition is skewed to polar residues; sequence AMESVATQGAS. Position 323 is a phosphoserine (Ser-323). Thr-329 bears the Phosphothreonine mark. The residue at position 330 (Ser-330) is a Phosphoserine. A disordered region spans residues 377–401; sequence KAPEEGNNNNDEKEMSTETSETHKT. Over residues 386 to 401 the composition is skewed to basic and acidic residues; it reads NDEKEMSTETSETHKT. A JmjC domain is found at 499 to 644; that stretch reads CSIRLLNPSA…NLLETLMPMV (146 aa). Residues His-545, Asp-547, and His-610 each contribute to the Fe cation site.

Belongs to the ROX family. NO66 subfamily. Requires Fe(2+) as cofactor.

Its subcellular location is the nucleus. It carries out the reaction N(6),N(6)-dimethyl-L-lysyl(36)-[histone H3] + 2 2-oxoglutarate + 2 O2 = L-lysyl(36)-[histone H3] + 2 formaldehyde + 2 succinate + 2 CO2. Functionally, oxygenase that can act as both a histone lysine demethylase and a ribosomal histidine hydroxylase. Specifically demethylates 'Lys-4' (H3K4me) and 'Lys-36' (H3K36me) of histone H3, thereby playing a central role in histone code. This Drosophila simulans (Fruit fly) protein is Bifunctional lysine-specific demethylase and histidyl-hydroxylase NO66.